The primary structure comprises 305 residues: Oxygen-dependent coproporphyrinogen-III oxidase (305 aa).

Serine 93 serves as a coordination point for substrate. Histidine 97 and histidine 107 together coordinate a divalent metal cation. The Proton donor role is filled by histidine 107. Position 109-111 (109-111 (NVR)) interacts with substrate. Residues histidine 146 and histidine 176 each contribute to the a divalent metal cation site. Positions 241-276 (YVEFNLVFDRGTLFGLQSGGRTESILMSLPPQVRWG) are important for dimerization. 259-261 (GGR) contacts substrate.

It belongs to the aerobic coproporphyrinogen-III oxidase family. Homodimer. It depends on a divalent metal cation as a cofactor.

It localises to the cytoplasm. It carries out the reaction coproporphyrinogen III + O2 + 2 H(+) = protoporphyrinogen IX + 2 CO2 + 2 H2O. It functions in the pathway porphyrin-containing compound metabolism; protoporphyrin-IX biosynthesis; protoporphyrinogen-IX from coproporphyrinogen-III (O2 route): step 1/1. Involved in the heme biosynthesis. Catalyzes the aerobic oxidative decarboxylation of propionate groups of rings A and B of coproporphyrinogen-III to yield the vinyl groups in protoporphyrinogen-IX. The sequence is that of Oxygen-dependent coproporphyrinogen-III oxidase from Pseudomonas aeruginosa (strain UCBPP-PA14).